Here is a 97-residue protein sequence, read N- to C-terminus: Integration host factor subunit alpha (97 aa).

Belongs to the bacterial histone-like protein family. In terms of assembly, heterodimer of an alpha and a beta chain.

This protein is one of the two subunits of integration host factor, a specific DNA-binding protein that functions in genetic recombination as well as in transcriptional and translational control. The polypeptide is Integration host factor subunit alpha (Histophilus somni (strain 2336) (Haemophilus somnus)).